The primary structure comprises 335 residues: Vitamin B12 import system permease protein BtuC (335 aa).

9 helical membrane-spanning segments follow: residues 21–43 (FLAI…GENW), 63–82 (FPRV…AGAV), 95–114 (GLLG…VLMF), 119–141 (PFWL…LLTF), 153–175 (LLVG…YFST), 195–212 (WRHQ…IWLS), 244–266 (FAVG…IGLV), 281–303 (TLLP…LSRL), and 310–329 (VPIG…WLLL).

The protein belongs to the binding-protein-dependent transport system permease family. FecCD subfamily. As to quaternary structure, the complex is composed of two ATP-binding proteins (BtuD), two transmembrane proteins (BtuC) and a solute-binding protein (BtuF).

It localises to the cell inner membrane. Functionally, part of the ABC transporter complex BtuCDF involved in vitamin B12 import. Involved in the translocation of the substrate across the membrane. This chain is Vitamin B12 import system permease protein BtuC, found in Photorhabdus laumondii subsp. laumondii (strain DSM 15139 / CIP 105565 / TT01) (Photorhabdus luminescens subsp. laumondii).